Here is a 65-residue protein sequence, read N- to C-terminus: Large ribosomal subunit protein bL35 (65 aa).

This sequence belongs to the bacterial ribosomal protein bL35 family.

This is Large ribosomal subunit protein bL35 from Synechococcus sp. (strain WH7803).